The following is a 327-amino-acid chain: Undecaprenyl-phosphate 4-deoxy-4-formamido-L-arabinose transferase (327 aa).

A run of 2 helical transmembrane segments spans residues 233 to 253 (ILSL…LLLI) and 268 to 288 (VFTL…GMGL).

It belongs to the glycosyltransferase 2 family.

The protein localises to the cell inner membrane. The catalysed reaction is UDP-4-deoxy-4-formamido-beta-L-arabinose + di-trans,octa-cis-undecaprenyl phosphate = 4-deoxy-4-formamido-alpha-L-arabinopyranosyl di-trans,octa-cis-undecaprenyl phosphate + UDP. The protein operates within glycolipid biosynthesis; 4-amino-4-deoxy-alpha-L-arabinose undecaprenyl phosphate biosynthesis; 4-amino-4-deoxy-alpha-L-arabinose undecaprenyl phosphate from UDP-4-deoxy-4-formamido-beta-L-arabinose and undecaprenyl phosphate: step 1/2. It functions in the pathway bacterial outer membrane biogenesis; lipopolysaccharide biosynthesis. Functionally, catalyzes the transfer of 4-deoxy-4-formamido-L-arabinose from UDP to undecaprenyl phosphate. The modified arabinose is attached to lipid A and is required for resistance to polymyxin and cationic antimicrobial peptides. This is Undecaprenyl-phosphate 4-deoxy-4-formamido-L-arabinose transferase from Pectobacterium atrosepticum (strain SCRI 1043 / ATCC BAA-672) (Erwinia carotovora subsp. atroseptica).